Here is a 204-residue protein sequence, read N- to C-terminus: Small ribosomal subunit protein uS4 (204 aa).

Positions 25–47 (SPVNKREYGPGQHGQRRKKPSDY) are disordered. The S4 RNA-binding domain maps to 93–156 (RRLDAVVYRM…KQFAFVMEAA (64 aa)).

Belongs to the universal ribosomal protein uS4 family. In terms of assembly, part of the 30S ribosomal subunit. Contacts protein S5. The interaction surface between S4 and S5 is involved in control of translational fidelity.

One of the primary rRNA binding proteins, it binds directly to 16S rRNA where it nucleates assembly of the body of the 30S subunit. In terms of biological role, with S5 and S12 plays an important role in translational accuracy. This Rhodospirillum centenum (strain ATCC 51521 / SW) protein is Small ribosomal subunit protein uS4.